The primary structure comprises 320 residues: ATP-dependent 6-phosphofructokinase (320 aa).

ATP is bound at residue G11. Position 21 to 25 (21 to 25 (RAVVR)) interacts with ADP. ATP contacts are provided by residues 72–73 (RY) and 102–105 (GDGS). D103 provides a ligand contact to Mg(2+). 125-127 (TID) lines the substrate pocket. D127 serves as the catalytic Proton acceptor. Position 154 (R154) interacts with ADP. Substrate contacts are provided by residues R162 and 169–171 (MGR). Residues 185 to 187 (GAD), R211, and 213 to 215 (KKH) each bind ADP. Substrate-binding positions include E222, R243, and 249 to 252 (HVVR).

It belongs to the phosphofructokinase type A (PFKA) family. ATP-dependent PFK group I subfamily. Prokaryotic clade 'B1' sub-subfamily. Homotetramer. Mg(2+) is required as a cofactor.

The protein resides in the cytoplasm. It catalyses the reaction beta-D-fructose 6-phosphate + ATP = beta-D-fructose 1,6-bisphosphate + ADP + H(+). It functions in the pathway carbohydrate degradation; glycolysis; D-glyceraldehyde 3-phosphate and glycerone phosphate from D-glucose: step 3/4. Its activity is regulated as follows. Allosterically activated by ADP and other diphosphonucleosides, and allosterically inhibited by phosphoenolpyruvate. Functionally, catalyzes the phosphorylation of D-fructose 6-phosphate to fructose 1,6-bisphosphate by ATP, the first committing step of glycolysis. In Enterococcus faecalis (strain ATCC 700802 / V583), this protein is ATP-dependent 6-phosphofructokinase.